A 319-amino-acid chain; its full sequence is MTNSSTFCPVYRDLEPFTYFFYLVFLIGIIGSCFATWAFIQKTTNHRCVSIYLINLLTADFLLTLALPVKIIVDLGVAPWKLRIFHCQVTACLIYINMYLSIIFLAFVSIDRCLQLIHSCKIYRIQEPGFAKMISAVVWLMVLLIMVPNMVIPIKDIKEKSNVGCMEFKKEFGRNWHLLTNFICVAIFLNFSVIILISNFLAIRQLYRNRDNTNYPSVKSALLHILLVTASYIICFVPYHAVRIPYTLSQTEVISDCSTRIALFKAKEATLLLAVSNLCFDPILYYHLSKAFRLKVTETFASPKKSKPLEERLRSENDV.

Residues 1–21 (MTNSSTFCPVYRDLEPFTYFF) lie on the Extracellular side of the membrane. An N-linked (GlcNAc...) asparagine glycan is attached at Asn3. A helical transmembrane segment spans residues 22–42 (YLVFLIGIIGSCFATWAFIQK). The Cytoplasmic portion of the chain corresponds to 43-48 (TTNHRC). Residues 49-69 (VSIYLINLLTADFLLTLALPV) traverse the membrane as a helical segment. At 70–89 (KIIVDLGVAPWKLRIFHCQV) the chain is on the extracellular side. Residues 90–110 (TACLIYINMYLSIIFLAFVSI) traverse the membrane as a helical segment. At 111-132 (DRCLQLIHSCKIYRIQEPGFAK) the chain is on the cytoplasmic side. Residues 133-153 (MISAVVWLMVLLIMVPNMVIP) traverse the membrane as a helical segment. Residues 154–181 (IKDIKEKSNVGCMEFKKEFGRNWHLLTN) are Extracellular-facing. A helical transmembrane segment spans residues 182-202 (FICVAIFLNFSVIILISNFLA). At 203 to 224 (IRQLYRNRDNTNYPSVKSALLH) the chain is on the cytoplasmic side. A helical transmembrane segment spans residues 225–245 (ILLVTASYIICFVPYHAVRIP). Residues 246–268 (YTLSQTEVISDCSTRIALFKAKE) lie on the Extracellular side of the membrane. Residues 269–289 (ATLLLAVSNLCFDPILYYHLS) form a helical membrane-spanning segment. Residues 290–319 (KAFRLKVTETFASPKKSKPLEERLRSENDV) lie on the Cytoplasmic side of the membrane.

It belongs to the G-protein coupled receptor 1 family. In terms of tissue distribution, highly expressed in hypothalamus, including the arcuate nucleus, paraventricular nucleus and dorsomedial hypothalamus. Expressed in periaqueductal gray (at protein level), found primarily in GABAergic neurons and to a lesser extent in glutamatergic neurons. Expressed in T cells and natural killer cells.

It is found in the cell membrane. Functionally, G-protein coupled receptor for Big LEN, a 16-amino acid neuropeptide produced from the precursor protein, proSAAS (encoded by PCSK1N). Acts through a G(i)-alpha-mediated pathway in response to Big LEN. Big LEN-GPR171 system plays an important role in regulating feeding and metabolism. Also plays a role in modulating fear and anxiety-like behaviors in the basolateral amygdala. Big LEN-GPR171 modulates the mu-type opioid receptor signaling and antinociception. Acts as a negative regulator T cell function. The protein is G-protein coupled receptor 171 (Gpr171) of Mus musculus (Mouse).